A 103-amino-acid chain; its full sequence is Large ribosomal subunit protein bL21 (103 aa).

This sequence belongs to the bacterial ribosomal protein bL21 family. Part of the 50S ribosomal subunit. Contacts protein L20.

In terms of biological role, this protein binds to 23S rRNA in the presence of protein L20. In Alcanivorax borkumensis (strain ATCC 700651 / DSM 11573 / NCIMB 13689 / SK2), this protein is Large ribosomal subunit protein bL21.